Here is a 204-residue protein sequence, read N- to C-terminus: Holliday junction branch migration complex subunit RuvA (204 aa).

The segment at 1–67 is domain I; sequence MIAFLSGHLV…ETELVLYGFG (67 aa). The interval 68-146 is domain II; the sequence is SPAERDLFVE…HWRQGMGVAD (79 aa). Residues 147 to 157 form a flexible linker region; the sequence is QPLAGGPPMPI. A domain III region spans residues 157–204; the sequence is IREEVEMALLALGYSTQEIQAALQALPTHPRPTEDWLRDAITYLSQQP.

It belongs to the RuvA family. Homotetramer. Forms an RuvA(8)-RuvB(12)-Holliday junction (HJ) complex. HJ DNA is sandwiched between 2 RuvA tetramers; dsDNA enters through RuvA and exits via RuvB. An RuvB hexamer assembles on each DNA strand where it exits the tetramer. Each RuvB hexamer is contacted by two RuvA subunits (via domain III) on 2 adjacent RuvB subunits; this complex drives branch migration. In the full resolvosome a probable DNA-RuvA(4)-RuvB(12)-RuvC(2) complex forms which resolves the HJ.

It localises to the cytoplasm. Functionally, the RuvA-RuvB-RuvC complex processes Holliday junction (HJ) DNA during genetic recombination and DNA repair, while the RuvA-RuvB complex plays an important role in the rescue of blocked DNA replication forks via replication fork reversal (RFR). RuvA specifically binds to HJ cruciform DNA, conferring on it an open structure. The RuvB hexamer acts as an ATP-dependent pump, pulling dsDNA into and through the RuvAB complex. HJ branch migration allows RuvC to scan DNA until it finds its consensus sequence, where it cleaves and resolves the cruciform DNA. This chain is Holliday junction branch migration complex subunit RuvA, found in Synechococcus sp. (strain JA-2-3B'a(2-13)) (Cyanobacteria bacterium Yellowstone B-Prime).